The sequence spans 326 residues: MSNISVIGTGSYVPNDIITNDFLSTIVDTSDEWIRTRTGILERRISKEENTIYMATESAKEAIKNANIDANDLDLIIVATLTPDNFMPSTACSVQKEIGAINALCFDISAACSGFIYGLEIACSMLKNSFRNKALIIGAENLSKIVDWEDRNTCVLFGDGAGAAILSKTKEEGILEFHSGSNGLKGEHLTCGVLKANNTSNKNDRLEKNNFIKMNGKEIFRFAVGAMNETICNIQEKTKWDLNEVKYIISHQANSRIIEYTAKKLNTEKDKFYMNLDKYGNTSAASIPIALDEMNKRGLLNKQDKIILVGFGGGLTFGGAAIVWSI.

Active-site residues include Cys-112 and His-251. The segment at 252–256 (QANSR) is ACP-binding. The active site involves Asn-281.

This sequence belongs to the thiolase-like superfamily. FabH family. As to quaternary structure, homodimer.

The protein resides in the cytoplasm. It catalyses the reaction malonyl-[ACP] + acetyl-CoA + H(+) = 3-oxobutanoyl-[ACP] + CO2 + CoA. Its pathway is lipid metabolism; fatty acid biosynthesis. Its function is as follows. Catalyzes the condensation reaction of fatty acid synthesis by the addition to an acyl acceptor of two carbons from malonyl-ACP. Catalyzes the first condensation reaction which initiates fatty acid synthesis and may therefore play a role in governing the total rate of fatty acid production. Possesses both acetoacetyl-ACP synthase and acetyl transacylase activities. Its substrate specificity determines the biosynthesis of branched-chain and/or straight-chain of fatty acids. The sequence is that of Beta-ketoacyl-[acyl-carrier-protein] synthase III from Clostridium botulinum (strain Loch Maree / Type A3).